Consider the following 620-residue polypeptide: 1-deoxy-D-xylulose-5-phosphate synthase (620 aa).

Residues histidine 80 and 121-123 (GHS) contribute to the thiamine diphosphate site. Aspartate 152 serves as a coordination point for Mg(2+). Residues 153-154 (GA), asparagine 181, tyrosine 288, and glutamate 370 each bind thiamine diphosphate. Asparagine 181 is a binding site for Mg(2+).

Belongs to the transketolase family. DXPS subfamily. As to quaternary structure, homodimer. Requires Mg(2+) as cofactor. The cofactor is thiamine diphosphate.

It carries out the reaction D-glyceraldehyde 3-phosphate + pyruvate + H(+) = 1-deoxy-D-xylulose 5-phosphate + CO2. The protein operates within metabolic intermediate biosynthesis; 1-deoxy-D-xylulose 5-phosphate biosynthesis; 1-deoxy-D-xylulose 5-phosphate from D-glyceraldehyde 3-phosphate and pyruvate: step 1/1. In terms of biological role, catalyzes the acyloin condensation reaction between C atoms 2 and 3 of pyruvate and glyceraldehyde 3-phosphate to yield 1-deoxy-D-xylulose-5-phosphate (DXP). The chain is 1-deoxy-D-xylulose-5-phosphate synthase from Salmonella arizonae (strain ATCC BAA-731 / CDC346-86 / RSK2980).